We begin with the raw amino-acid sequence, 323 residues long: tRNA U34 carboxymethyltransferase (323 aa).

Carboxy-S-adenosyl-L-methionine is bound by residues Lys-91, Trp-105, Lys-110, Gly-130, 152-154, 181-182, Met-196, Tyr-200, and Arg-315; these read DPT and IE.

The protein belongs to the class I-like SAM-binding methyltransferase superfamily. CmoB family. Homotetramer.

It catalyses the reaction carboxy-S-adenosyl-L-methionine + 5-hydroxyuridine(34) in tRNA = 5-carboxymethoxyuridine(34) in tRNA + S-adenosyl-L-homocysteine + H(+). Its function is as follows. Catalyzes carboxymethyl transfer from carboxy-S-adenosyl-L-methionine (Cx-SAM) to 5-hydroxyuridine (ho5U) to form 5-carboxymethoxyuridine (cmo5U) at position 34 in tRNAs. The sequence is that of tRNA U34 carboxymethyltransferase from Salmonella typhimurium (strain LT2 / SGSC1412 / ATCC 700720).